Reading from the N-terminus, the 350-residue chain is Dihydroorotase (350 aa).

Zn(2+) contacts are provided by His-17 and His-19. Substrate is bound by residues 19-21 and Asn-45; that span reads HLR. Zn(2+) is bound by residues Lys-103, His-140, and His-178. Lys-103 carries the post-translational modification N6-carboxylysine. Residue His-140 coordinates substrate. Leu-224 serves as a coordination point for substrate. Asp-252 lines the Zn(2+) pocket. Residue Asp-252 is part of the active site. Residues His-256 and Ala-268 each contribute to the substrate site.

This sequence belongs to the metallo-dependent hydrolases superfamily. DHOase family. Class II DHOase subfamily. As to quaternary structure, homodimer. Zn(2+) is required as a cofactor.

It catalyses the reaction (S)-dihydroorotate + H2O = N-carbamoyl-L-aspartate + H(+). It participates in pyrimidine metabolism; UMP biosynthesis via de novo pathway; (S)-dihydroorotate from bicarbonate: step 3/3. Its function is as follows. Catalyzes the reversible cyclization of carbamoyl aspartate to dihydroorotate. The chain is Dihydroorotase from Buchnera aphidicola subsp. Acyrthosiphon pisum (strain APS) (Acyrthosiphon pisum symbiotic bacterium).